Here is a 327-residue protein sequence, read N- to C-terminus: Thiamine-monophosphate kinase (327 aa).

Aspartate 30, serine 45, serine 46, and aspartate 47 together coordinate Mg(2+). Histidine 54 contributes to the substrate binding site. Aspartate 76 lines the Mg(2+) pocket. Residues tyrosine 106, glycine 123 to aspartate 124, and arginine 149 contribute to the ATP site. Aspartate 124 contributes to the Mg(2+) binding site. Residue aspartate 221 participates in Mg(2+) binding. Position 223 (serine 223) interacts with ATP. Aspartate 224 provides a ligand contact to Mg(2+). Substrate-binding residues include glutamate 268 and phenylalanine 321.

Belongs to the thiamine-monophosphate kinase family.

It catalyses the reaction thiamine phosphate + ATP = thiamine diphosphate + ADP. It participates in cofactor biosynthesis; thiamine diphosphate biosynthesis; thiamine diphosphate from thiamine phosphate: step 1/1. Its function is as follows. Catalyzes the ATP-dependent phosphorylation of thiamine-monophosphate (TMP) to form thiamine-pyrophosphate (TPP), the active form of vitamin B1. In Synechococcus elongatus (strain ATCC 33912 / PCC 7942 / FACHB-805) (Anacystis nidulans R2), this protein is Thiamine-monophosphate kinase.